The chain runs to 133 residues: Nickel-responsive regulator (133 aa).

Ni(2+) is bound by residues His76, His87, His89, and Cys95.

It belongs to the transcriptional regulatory CopG/NikR family. In terms of assembly, homotetramer. The cofactor is Ni(2+).

Its function is as follows. Transcriptional repressor of the nikABCDE operon. Is active in the presence of excessive concentrations of intracellular nickel. The chain is Nickel-responsive regulator from Escherichia coli O6:K15:H31 (strain 536 / UPEC).